Consider the following 123-residue polypeptide: Anti-lipopolysaccharide factor (123 aa).

The signal sequence occupies residues 1–26 (MRTRVMAGLCVALVVMCLYMPQPCEA). A disulfide bond links cysteine 55 and cysteine 76.

As to expression, strong expression in hemocytes, heart and muscle, with weaker expression detected in gills and hepatopancreas. No expression detected in eyes.

Its subcellular location is the secreted. Binds to bacterial LPS and may specifically inhibit the LPS-mediated activation of the hemolymph coagulation. It has a strong antibacterial effect especially on the growth of Gram-negative bacteria. This is Anti-lipopolysaccharide factor from Scylla serrata (Mud crab).